The sequence spans 430 residues: Phosphomethylpyrimidine synthase (430 aa).

Substrate contacts are provided by residues Asn-67, Met-96, Tyr-125, His-161, 183–185 (SRG), 224–227 (DALR), and Glu-263. Residue His-267 coordinates Zn(2+). Substrate is bound at residue Tyr-290. Residue His-331 coordinates Zn(2+). Cys-406, Cys-409, and Cys-413 together coordinate [4Fe-4S] cluster.

Belongs to the ThiC family. In terms of assembly, homodimer. The cofactor is [4Fe-4S] cluster.

It catalyses the reaction 5-amino-1-(5-phospho-beta-D-ribosyl)imidazole + S-adenosyl-L-methionine = 4-amino-2-methyl-5-(phosphooxymethyl)pyrimidine + CO + 5'-deoxyadenosine + formate + L-methionine + 3 H(+). The protein operates within cofactor biosynthesis; thiamine diphosphate biosynthesis. Functionally, catalyzes the synthesis of the hydroxymethylpyrimidine phosphate (HMP-P) moiety of thiamine from aminoimidazole ribotide (AIR) in a radical S-adenosyl-L-methionine (SAM)-dependent reaction. In Campylobacter jejuni subsp. doylei (strain ATCC BAA-1458 / RM4099 / 269.97), this protein is Phosphomethylpyrimidine synthase.